An 853-amino-acid polypeptide reads, in one-letter code: MSAIENFDAHTPMMQQYLRLKAQHPEILLFYRMGDFYELFYDDAKRASQLLDISLTKRGASAGEPIPMAGIPYHAVENYLAKLVNQGESVAICEQIGDPATSKGPVERKVVRIVTPGTISDEALLQERQDNLLAAIWQDSKGFGYATLDISSGRFRLSEPADRETMAAELQRTNPAELLYAEDFAEMSLIEGRRGLRRRPLWEFEIDTARQQLNLQFGTRDLVGFGVENAPRGLCAAGCLLQYAKDTQRTTLPHIRSITMEREQDSIIMDAATRRNLEITQNLAGGAENTLASVLDCTVTPMGSRMLKRWLHMPVRDTRVLLERQQTIGALQDFTAELQPVLRQVGDLERILARLALRTARPRDLARMRHAFQQLPELRAQLETVDSAPVQALREKMGEFAELRDLLERAIIDTPPVLVRDGGVIASGYNEELDEWRALADGATDYLERLEVRERERTGLDTLKVGFNAVHGYYIQISRGQSHLAPINYMRRQTLKNAERYIIPELKEYEDKVLTSKGKALALEKQLYEELFDLLLPHLEALQQSASALAELDVLVNLAERAYTLNYTCPTFIDKPGIRITEGRHPVVEQVLNEPFIANPLNLSPQRRMLIITGPNMGGKSTYMRQTALIALMAYIGSYVPAQKVEIGPIDRIFTRVGAADDLASGRSTFMVEMTETANILHNATEYSLVLMDEIGRGTSTYDGLSLAWACAENLANKIKALTLFATHYFELTQLPEKMEGVANVHLDALEHGDTIAFMHSVQDGAASKSYGLAVAALAGVPKEVIKRARQKLRELESISPNAAATQVDGTQMSLLSVPEETSPAVEALENLDPDSLTPRQALEWIYRLKSLV.

614 to 621 serves as a coordination point for ATP; the sequence is GPNMGGKS.

Belongs to the DNA mismatch repair MutS family.

This protein is involved in the repair of mismatches in DNA. It is possible that it carries out the mismatch recognition step. This protein has a weak ATPase activity. This Escherichia coli (strain 55989 / EAEC) protein is DNA mismatch repair protein MutS.